The sequence spans 212 residues: External core antigen (212 aa).

The first 19 residues, 1-19 (MQLFHLCLIISCSCPTVQA), serve as a signal peptide directing secretion. Residues 25-27 (GWL) are HBEAG. Residues 165 to 212 (NAPILSTLPETTVVRRRGRSPRRRTPSPRRRRSQSPRRRRSQSRESQC) are disordered. Residues 178–205 (VRRRGRSPRRRTPSPRRRRSQSPRRRRS) are compositionally biased toward basic residues. A 1; half-length repeat occupies 184–190 (SPRRRTP). The tract at residues 184–206 (SPRRRTPSPRRRRSQSPRRRRSQ) is 3 X 8 AA repeats of S-P-R-R-R-R-S-Q. A propeptide spanning residues 184 to 212 (SPRRRTPSPRRRRSQSPRRRRSQSRESQC) is cleaved from the precursor. A run of 2 repeats spans residues 191-198 (SPRRRRSQ) and 199-206 (SPRRRRSQ).

Belongs to the orthohepadnavirus precore antigen family. In terms of assembly, homodimerizes. Post-translationally, phosphorylated. In terms of processing, cleaved by host furin.

The protein resides in the secreted. It is found in the host nucleus. In terms of biological role, may regulate immune response to the intracellular capsid in acting as a T-cell tolerogen, by having an immunoregulatory effect which prevents destruction of infected cells by cytotoxic T-cells. This immune regulation may predispose to chronicity during perinatal infections and prevent severe liver injury during adult infections. This Homo sapiens (Human) protein is External core antigen.